Reading from the N-terminus, the 353-residue chain is UPF0283 membrane protein YcjF (353 aa).

The next 3 membrane-spanning stretches (helical) occupy residues methionine 70–threonine 90, valine 100–valine 120, and glutamate 213–tryptophan 233.

It belongs to the UPF0283 family.

It is found in the cell inner membrane. This chain is UPF0283 membrane protein YcjF, found in Escherichia coli O127:H6 (strain E2348/69 / EPEC).